Here is a 521-residue protein sequence, read N- to C-terminus: Exodeoxyribonuclease 7 large subunit (521 aa).

Residues 494-521 (ATSGAARPKPAAKPSTKAKEPGNQGSLF) form a disordered region. Over residues 498-508 (AARPKPAAKPS) the composition is skewed to low complexity.

The protein belongs to the XseA family. As to quaternary structure, heterooligomer composed of large and small subunits.

Its subcellular location is the cytoplasm. It catalyses the reaction Exonucleolytic cleavage in either 5'- to 3'- or 3'- to 5'-direction to yield nucleoside 5'-phosphates.. Functionally, bidirectionally degrades single-stranded DNA into large acid-insoluble oligonucleotides, which are then degraded further into small acid-soluble oligonucleotides. This Mesorhizobium japonicum (strain LMG 29417 / CECT 9101 / MAFF 303099) (Mesorhizobium loti (strain MAFF 303099)) protein is Exodeoxyribonuclease 7 large subunit.